We begin with the raw amino-acid sequence, 244 residues long: Phosphoadenosine 5'-phosphosulfate reductase (244 aa).

Catalysis depends on Cys239, which acts as the Nucleophile; cysteine thiosulfonate intermediate.

The protein belongs to the PAPS reductase family. CysH subfamily.

It is found in the cytoplasm. It carries out the reaction [thioredoxin]-disulfide + sulfite + adenosine 3',5'-bisphosphate + 2 H(+) = [thioredoxin]-dithiol + 3'-phosphoadenylyl sulfate. The protein operates within sulfur metabolism; hydrogen sulfide biosynthesis; sulfite from sulfate: step 3/3. Catalyzes the formation of sulfite from phosphoadenosine 5'-phosphosulfate (PAPS) using thioredoxin as an electron donor. The protein is Phosphoadenosine 5'-phosphosulfate reductase of Salmonella typhi.